The primary structure comprises 259 residues: Ribonuclease HII (259 aa).

The region spanning 70–258 (TLIAGIDEVG…VKSLVLGKKE (189 aa)) is the RNase H type-2 domain. The a divalent metal cation site is built by Asp76, Glu77, and Asp168.

It belongs to the RNase HII family. The cofactor is Mn(2+). It depends on Mg(2+) as a cofactor.

It is found in the cytoplasm. It carries out the reaction Endonucleolytic cleavage to 5'-phosphomonoester.. In terms of biological role, endonuclease that specifically degrades the RNA of RNA-DNA hybrids. The chain is Ribonuclease HII from Streptococcus pneumoniae (strain Hungary19A-6).